A 211-amino-acid chain; its full sequence is DNA-directed RNA polymerases I, II, and III subunit RPABC1 (211 aa).

It belongs to the archaeal Rpo5/eukaryotic RPB5 RNA polymerase subunit family. In terms of assembly, component of the RNA polymerase I (Pol I), RNA polymerase II (Pol II) and RNA polymerase III (Pol III) complexes consisting of at least 13, 12 and 17 subunits, respectively. In RNA Pol II, this subunit is present in 2-fold molar excess over the other subunits.

The protein resides in the nucleus. Functionally, DNA-dependent RNA polymerase catalyzes the transcription of DNA into RNA using the four ribonucleoside triphosphates as substrates. Common component of RNA polymerases I, II and III which synthesize ribosomal RNA precursors, mRNA precursors and many functional non-coding RNAs, and small RNAs, such as 5S rRNA and tRNAs, respectively. Pol II is the central component of the basal RNA polymerase II transcription machinery. Pols are composed of mobile elements that move relative to each other. In Pol II, RPB5 is part of the lower jaw surrounding the central large cleft and thought to grab the incoming DNA template. Seems to be the major component in this process. The protein is DNA-directed RNA polymerases I, II, and III subunit RPABC1 of Caenorhabditis briggsae.